The primary structure comprises 204 residues: Octanoyltransferase (204 aa).

In terms of domain architecture, BPL/LPL catalytic spans 27–202 (QGGEEALLLL…RFQPLLNLHL (176 aa)). Substrate-binding positions include 65–72 (RGGDVTYH), 132–134 (SIG), and 145–147 (GFA). The active-site Acyl-thioester intermediate is the C163.

It belongs to the LipB family.

The protein resides in the cytoplasm. The enzyme catalyses octanoyl-[ACP] + L-lysyl-[protein] = N(6)-octanoyl-L-lysyl-[protein] + holo-[ACP] + H(+). It functions in the pathway protein modification; protein lipoylation via endogenous pathway; protein N(6)-(lipoyl)lysine from octanoyl-[acyl-carrier-protein]: step 1/2. Functionally, catalyzes the transfer of endogenously produced octanoic acid from octanoyl-acyl-carrier-protein onto the lipoyl domains of lipoate-dependent enzymes. Lipoyl-ACP can also act as a substrate although octanoyl-ACP is likely to be the physiological substrate. This chain is Octanoyltransferase, found in Citrifermentans bemidjiense (strain ATCC BAA-1014 / DSM 16622 / JCM 12645 / Bem) (Geobacter bemidjiensis).